The chain runs to 220 residues: Putative respiratory nitrate reductase subunit Rieske (220 aa).

One can recognise a Rieske domain in the interval Lys-118 to Ile-206. [2Fe-2S] cluster-binding residues include Cys-151, His-153, Cys-168, and His-171. Cys-156 and Cys-170 are oxidised to a cystine.

Probable multiprotein complex; a catalytic heterodimer of an alpha and beta chain is proposed to associate with additional subunits involved in membrane attachment and electron transfer. [2Fe-2S] cluster serves as cofactor.

It is found in the cell membrane. Its function is as follows. The respiratory membrane-bound nitrate reductase enzyme complex plays a role in generation of metabolic energy by using nitrate as a terminal electron acceptor during anaerobic conditions. Proposed Rieske subunit involved in a protonmotive Q-cycle mechanism-based electron transfer electrons to the beta subunit. The polypeptide is Putative respiratory nitrate reductase subunit Rieske (narB) (Haloferax mediterranei (strain ATCC 33500 / DSM 1411 / JCM 8866 / NBRC 14739 / NCIMB 2177 / R-4) (Halobacterium mediterranei)).